The primary structure comprises 228 residues: Glucose-induced degradation protein 8 homolog (228 aa).

A LisH domain is found at Ser-29–Thr-61. Positions Ser-67–Glu-124 constitute a CTLH domain.

Belongs to the GID8 family.

The protein localises to the cytoplasm. The protein resides in the nucleus. Core component of the CTLH E3 ubiquitin-protein ligase complex that mediates ubiquitination and subsequent proteasomal degradation of target proteins. Acts as a positive regulator of Wnt signaling pathway by promoting beta-catenin (CTNNB1) nuclear accumulation. This chain is Glucose-induced degradation protein 8 homolog, found in Dictyostelium discoideum (Social amoeba).